The chain runs to 282 residues: Protein-glutamine deamidase Cif (282 aa).

The segment at 1–16 (MKDITLPPPTSASCLT) is translocation domain (TD). Residues Cys109, His165, and Gln185 contribute to the active site.

The protein belongs to the Cif family.

Its subcellular location is the secreted. The protein resides in the host nucleus. It catalyses the reaction L-glutaminyl-[protein] + H2O = L-glutamyl-[protein] + NH4(+). Functionally, protein-glutamine deamidase effector that inhibits the host cell cycle and other key cellular processes such as the actin network and programmed-cell death. Acts by mediating the side chain deamidation of 'Gln-40' of host NEDD8, converting it to glutamate, thereby abolishing the activity of cullin-RING-based E3 ubiquitin-protein ligase complexes (CRL complexes). Inactivation of CRL complexes prevents ubiquitination and subsequent degradation of the cyclin-dependent kinase inhibitors CDKN1A/p21 and CDKN1B/p27, leading to G1 and G2 cell cycle arrests in host cells. Also able to catalyze deamidation of 'Gln-40' of host ubiquitin in vitro; however, NEDD8 constitutes the preferred substrate in vivo. In Escherichia coli, this protein is Protein-glutamine deamidase Cif.